The sequence spans 173 residues: Mesencephalic astrocyte-derived neurotrophic factor homolog (173 aa).

A signal peptide spans 1 to 22 (MKTWHMVVVIGFLATLAQTSLA). Disulfide bonds link Cys-28-Cys-114, Cys-31-Cys-103, Cys-61-Cys-72, and Cys-148-Cys-151.

This sequence belongs to the ARMET family.

It localises to the secreted. Its function is as follows. Required during the maturation of the embryonic nervous system for maintenance of neuronal and cuticular connectivity. Essential for maintenance of dopaminergic neurons and dopamine levels. This Drosophila simulans (Fruit fly) protein is Mesencephalic astrocyte-derived neurotrophic factor homolog.